A 912-amino-acid polypeptide reads, in one-letter code: MEDFARGAASPGPSRPGLVPVSIIGAEDEDFENELETNSEEQNSQFQSLEQVKRRPAHLMALLQHVALQFEPGPLLCCLHADMLGSLGPKEAKKAFLDFYHSFLEKTAVLRVPVPPNVAFELDRTRADLISEDVQRRFVQEVVQSQQVAVGRQLEDFRSKRLMGMTPWEQELAQLEAWVGRDRASYEARERHVAERLLMHLEEMQHTISTDEEKSAAVVNAIGLYMRHLGVRTKSGDKKSGRNFFRKKVMGNRRSDEPAKTKKGLSSILDAARWNRGEPQVPDFRHLKAEVDAEKPGATDRKGGVGMPSRDRNIGAPGQDTPGVSLHPLSLDSPDREPGADAPLELGDSSPQGPMSLESLAPPESTDEGAETESPEPGDEGEPGRSGLELEPEEPPGWRELVPPDTLHSLPKSQVKRQEVISELLVTEAAHVRMLRVLHDLFFQPMAECLFFPLEELQNIFPSLDELIEVHSLFLDRLMKRRQESGYLIEEIGDVLLARFDGAEGSWFQKISSRFCSRQSFALEQLKAKQRKDPRFCAFVQEAESRPRCRRLQLKDMIPTEMQRLTKYPLLLQSIGQNTEEPTEREKVELAAECCREILHHVNQAVRDMEDLLRLKDYQRRLDLSHLRQSSDPMLSEFKNLDITKKKLVHEGPLTWRVTKDKAVEVHVLLLDDLLLLLQRQDERLLLKSHSRTLTPTPDGKTMLRPVLRLTSAMTREVATDHKAFYVLFTWDQEAQIYELVAQTVSERKNWCALITETAGSLKVPAPASRPKPRPSPSSTREPLLSSSENGNGGRETSPADARTERILSDLLPFCRPGPEGQLAATALRKVLSLKQLLFPAEEDNGAGPPRDGDGVPGGGPLSPARTQEIQENLLSLEETMKQLEELEEEFCRLRPLLSQLGGNSVPQPGCT.

The 192-residue stretch at glutamate 41 to arginine 232 folds into the RGSL domain. Residues lysine 248 to serine 413 are disordered. Positions aspartate 283–asparagine 313 are enriched in basic and acidic residues. The segment covering serine 365 to glycine 381 has biased composition (acidic residues). Phosphoserine occurs at positions 374 and 409. In terms of domain architecture, DH spans lysine 416–alanine 605. Residues lysine 647–glycine 760 enclose the PH domain. Threonine 695 carries the phosphothreonine modification. A Phosphotyrosine; by JAK2 modification is found at tyrosine 738. Disordered regions lie at residues lysine 763–alanine 802 and alanine 841–alanine 865. Residues proline 777 to glutamate 789 show a composition bias toward low complexity. A Phosphoserine modification is found at serine 863. Residues alanine 865 to proline 896 adopt a coiled-coil conformation.

Interacts with RHOA, GNA12 and GNA13. Homooligomerizes through the coiled coil region. May interact with CCPG1. Interacts with CTNNAL1. In terms of processing, phosphorylated by PKCA. Angiotensin-2 induced Tyr-738 phosphorylation is mediated by JAK2. In terms of tissue distribution, ubiquitously expressed.

The protein resides in the cytoplasm. It is found in the membrane. In terms of biological role, seems to play a role in the regulation of RhoA GTPase by guanine nucleotide-binding alpha-12 (GNA12) and alpha-13 (GNA13) subunits. Acts as a GTPase-activating protein (GAP) for GNA12 and GNA13, and as guanine nucleotide exchange factor (GEF) for RhoA GTPase. Activated G alpha 13/GNA13 stimulates the RhoGEF activity through interaction with the RGS-like domain. This GEF activity is inhibited by binding to activated GNA12. Mediates angiotensin-2-induced RhoA activation. In lymphoid follicles, may trigger activation of GNA13 as part of S1PR2-dependent signaling pathway that leads to inhibition of germinal center (GC) B cell growth and migration outside the GC niche. The protein is Rho guanine nucleotide exchange factor 1 (ARHGEF1) of Homo sapiens (Human).